Reading from the N-terminus, the 421-residue chain is 2',3'-cyclic-nucleotide 3'-phosphodiesterase (421 aa).

Phosphoserine occurs at positions 6 and 9. The residue at position 110 (Y110) is a Phosphotyrosine. S170 carries the post-translational modification Phosphoserine. H251 acts as the Proton acceptor in catalysis. T253 contacts substrate. H330 acts as the Proton donor in catalysis. T332 serves as a coordination point for substrate. Position 359 is a phosphoserine (S359). C418 carries the cysteine methyl ester modification. C418 carries S-farnesyl cysteine lipidation. A propeptide spans 419-421 (TII) (removed in mature form).

It belongs to the 2H phosphoesterase superfamily. CNPase family. As to quaternary structure, exists as monomers and homodimers.

Its subcellular location is the membrane. It is found in the melanosome. The enzyme catalyses a nucleoside 2',3'-cyclic phosphate + H2O = a nucleoside 2'-phosphate + H(+). Catalyzes the formation of 2'-nucleotide products from 2',3'-cyclic substrates. May participate in RNA metabolism in the myelinating cell, CNP is the third most abundant protein in central nervous system myelin. The chain is 2',3'-cyclic-nucleotide 3'-phosphodiesterase from Pongo abelii (Sumatran orangutan).